Here is a 496-residue protein sequence, read N- to C-terminus: Pyrrole-2-carboxylic acid decarboxylase (496 aa).

A K(+)-binding site is contributed by tryptophan 166. Valine 168, arginine 170, glutamine 187, and histidine 188 together coordinate prenylated FMN. Histidine 188 lines the Mn(2+) pocket. K(+) is bound by residues alanine 218, alanine 219, methionine 221, and glutamate 229. Glutamate 229 contacts prenylated FMN. Glutamate 229 lines the Mn(2+) pocket. Residue glutamate 278 is the Proton donor of the active site. Histidine 386 provides a ligand contact to prenylated FMN.

It belongs to the UbiD family. UbiD-like/FDC subfamily. In terms of assembly, homodimer. The cofactor is prenylated FMN. Mn(2+) serves as cofactor. Requires K(+) as cofactor.

It catalyses the reaction pyrrole-2-carboxylate + H(+) = 1H-pyrrole + CO2. The enzyme catalyses pyrrole-2-carboxylate + H2O = 1H-pyrrole + hydrogencarbonate. Imidazole acts as a reversible inhibitor via the formation of an imidazole-prenyl-FMN adduct. Activity is light sensitive. In terms of biological role, catalyzes the prenyl-FMN-dependent decarboxylation of pyrrole-2-carboxylate (P2C). Can also catalyze the carboxylation of pyrrole in the presence of elevated concentrations of CO(2) or bicarbonate. Can accept a modest range of heteroaromatic compounds such as 3-methylpyrrole-2-carboxylate, indole-3-carboxylate and furan-2-carboxylate, and shows very low activity with thiophene-2-carboxylate. Attenuates the virulence of P.aeruginosa in a Drosophila model when overexpressed. This Pseudomonas aeruginosa (strain ATCC 15692 / DSM 22644 / CIP 104116 / JCM 14847 / LMG 12228 / 1C / PRS 101 / PAO1) protein is Pyrrole-2-carboxylic acid decarboxylase.